The sequence spans 443 residues: Tol-Pal system protein TolB (443 aa).

The signal sequence occupies residues 1–31 (MTRLAKGKWRSTLGAMMALAVMVAAIPQARA). Residues 423-432 (NERQISTPTE) show a composition bias toward polar residues. The tract at residues 423 to 443 (NERQISTPTEASDPAWSPLLP) is disordered.

This sequence belongs to the TolB family. As to quaternary structure, the Tol-Pal system is composed of five core proteins: the inner membrane proteins TolA, TolQ and TolR, the periplasmic protein TolB and the outer membrane protein Pal. They form a network linking the inner and outer membranes and the peptidoglycan layer.

It localises to the periplasm. Its function is as follows. Part of the Tol-Pal system, which plays a role in outer membrane invagination during cell division and is important for maintaining outer membrane integrity. This Rhodospirillum rubrum (strain ATCC 11170 / ATH 1.1.1 / DSM 467 / LMG 4362 / NCIMB 8255 / S1) protein is Tol-Pal system protein TolB.